Consider the following 360-residue polypeptide: Serine/threonine transporter SstT (360 aa).

The next 9 membrane-spanning stretches (helical) occupy residues I17–I37, F40–V60, V78–Y98, A138–F158, V179–I199, L212–I232, M295–I315, S316–A336, and V339–V359.

This sequence belongs to the dicarboxylate/amino acid:cation symporter (DAACS) (TC 2.A.23) family.

Its subcellular location is the cell membrane. The enzyme catalyses L-serine(in) + Na(+)(in) = L-serine(out) + Na(+)(out). It catalyses the reaction L-threonine(in) + Na(+)(in) = L-threonine(out) + Na(+)(out). Its function is as follows. Involved in the import of serine and threonine into the cell, with the concomitant import of sodium (symport system). This Streptococcus suis (strain 05ZYH33) protein is Serine/threonine transporter SstT.